Here is a 315-residue protein sequence, read N- to C-terminus: Probable diguanylate cyclase DgcF (315 aa).

A run of 4 helical transmembrane segments spans residues 10 to 30, 41 to 61, 80 to 100, and 116 to 136; these read FSTGVLIVPCMLTLAIPGVLP, IALIVSVIASVVIGGAGSLAF, LLTFVTGAVEIVLVANSVIDI, and LGIATMAICPIMVSFSVAAIN. The region spanning 173-310 is the GGDEF domain; that stretch reads QHLTVMLLDI…GRNRTSTMRY (138 aa). 2 residues coordinate Mg(2+): D181 and I182. N189, H194, and D198 together coordinate substrate. E224 is a binding site for Mg(2+).

Homodimer. The cofactor is Mg(2+).

It is found in the cell membrane. The catalysed reaction is 2 GTP = 3',3'-c-di-GMP + 2 diphosphate. It participates in purine metabolism; 3',5'-cyclic di-GMP biosynthesis. Its function is as follows. Catalyzes the synthesis of cyclic-di-GMP (c-di-GMP) via the condensation of 2 GTP molecules. This Escherichia coli (strain K12) protein is Probable diguanylate cyclase DgcF.